The primary structure comprises 102 residues: Protamine-2 (102 aa).

3 positions are modified to phosphoserine: Ser8, Ser10, and Ser37. Disordered stretches follow at residues 15–41 (EVYG…PEQV) and 66–102 (IHRQ…CRRH).

Belongs to the protamine P2 family. Interacts with TDRP. Proteolytic processing into mature chains is required for histone eviction during spermatogenesis. Transition proteins (TNP1 and TNP2) are required for processing. As to expression, testis.

The protein resides in the nucleus. It localises to the chromosome. Its function is as follows. Protamines substitute for histones in the chromatin of sperm during the haploid phase of spermatogenesis. They compact sperm DNA into a highly condensed, stable and inactive complex. This chain is Protamine-2 (PRM2), found in Pongo pygmaeus (Bornean orangutan).